Here is a 266-residue protein sequence, read N- to C-terminus: Undecaprenyl-diphosphatase (266 aa).

Transmembrane regions (helical) follow at residues 1–21 (MDTF…FLPI), 39–59 (QGLS…VMYF), 87–107 (WWII…KGFI), 111–131 (FRSI…LWWA), 144–164 (VGWK…IPGT), 183–203 (AAAR…AILV), 218–238 (ALGL…HYFL), and 246–266 (MTPF…FIFL).

The protein belongs to the UppP family.

The protein resides in the cell inner membrane. It catalyses the reaction di-trans,octa-cis-undecaprenyl diphosphate + H2O = di-trans,octa-cis-undecaprenyl phosphate + phosphate + H(+). Catalyzes the dephosphorylation of undecaprenyl diphosphate (UPP). Confers resistance to bacitracin. In Shewanella halifaxensis (strain HAW-EB4), this protein is Undecaprenyl-diphosphatase.